We begin with the raw amino-acid sequence, 360 residues long: Protein RecA (360 aa).

69 to 76 (GPESSGKT) lines the ATP pocket.

Belongs to the RecA family.

It is found in the cytoplasm. Can catalyze the hydrolysis of ATP in the presence of single-stranded DNA, the ATP-dependent uptake of single-stranded DNA by duplex DNA, and the ATP-dependent hybridization of homologous single-stranded DNAs. It interacts with LexA causing its activation and leading to its autocatalytic cleavage. The polypeptide is Protein RecA (Trichodesmium erythraeum (strain IMS101)).